A 227-amino-acid chain; its full sequence is Deoxyribose-phosphate aldolase (227 aa).

The active-site Proton donor/acceptor is D84. Catalysis depends on K146, which acts as the Schiff-base intermediate with acetaldehyde. Catalysis depends on K188, which acts as the Proton donor/acceptor.

Belongs to the DeoC/FbaB aldolase family. DeoC type 1 subfamily.

It is found in the cytoplasm. The enzyme catalyses 2-deoxy-D-ribose 5-phosphate = D-glyceraldehyde 3-phosphate + acetaldehyde. Its pathway is carbohydrate degradation; 2-deoxy-D-ribose 1-phosphate degradation; D-glyceraldehyde 3-phosphate and acetaldehyde from 2-deoxy-alpha-D-ribose 1-phosphate: step 2/2. Catalyzes a reversible aldol reaction between acetaldehyde and D-glyceraldehyde 3-phosphate to generate 2-deoxy-D-ribose 5-phosphate. In Pyrobaculum islandicum (strain DSM 4184 / JCM 9189 / GEO3), this protein is Deoxyribose-phosphate aldolase.